The chain runs to 340 residues: uncharacterized protein (340 aa).

The N-terminal stretch at 1–20 (MGGARRLKLDGSIPNQLARA) is a signal peptide.

This is an uncharacterized protein from Mycobacterium tuberculosis (strain CDC 1551 / Oshkosh).